A 274-amino-acid polypeptide reads, in one-letter code: Transcription factor MYB32 (274 aa).

HTH myb-type domains follow at residues 9–61 and 62–116; these read KDHT…INYL and RPDL…KRKL. DNA-binding regions (H-T-H motif) lie at residues 37–61 and 89–112; these read WRSL…INYL and WSLI…NTHV. The interval 123 to 144 is disordered; it reads PATHRPINETKTSQDSSDSSKT.

Mostly expressed in roots, and, to a lower extent, in stems, flower buds, and siliques.

The protein localises to the nucleus. The polypeptide is Transcription factor MYB32 (MYB32) (Arabidopsis thaliana (Mouse-ear cress)).